A 351-amino-acid chain; its full sequence is MVLSIRSQIIIGVVSSILLTSTILAIAYILMWFNGHMTLTLTLTTIITSCLTLLICSIFINPLIQKIKQFNIKTKQFANGNYASNDKTFNSPKEIYELNQSFNKMASEITQQMNQIKSEQQEKTELIQNLAHDLKTPLASIISYSEGLRDGIITKDHEIKESYDILIKQANRLSTLFDDMTHIITLNTGKTYPPELIQLDQLLVSILQPYEQRIKHENRTLEVNFCSEIDAFYQYRTPLERILTNLLDNALKFSNVGSRIDINISENKDQDTIDIAISDEGIGIIPELQERIFERTFRVENSRNTKTGGSGLGLYIANELAQQNNAKISVSSDIDVGTTMTVTLHKLDITT.

The next 2 helical transmembrane spans lie at 9–29 (IIIGVVSSILLTSTILAIAYI) and 40–60 (TLTLTTIITSCLTLLICSIFI). Residues 61–114 (NPLIQKIKQFNIKTKQFANGNYASNDKTFNSPKEIYELNQSFNKMASEITQQMN) form the HAMP domain. The Histidine kinase domain maps to 129–348 (NLAHDLKTPL…TMTVTLHKLD (220 aa)). His-132 carries the post-translational modification Phosphohistidine; by autocatalysis.

Autophosphorylated.

The protein localises to the cell membrane. It carries out the reaction ATP + protein L-histidine = ADP + protein N-phospho-L-histidine.. In terms of biological role, member of the two-component regulatory system SaeR/SaeS involved in the regulation of staphylococcal virulence factors in a strain-dependent fashion. Probably functions as a membrane-associated protein kinase that upon sensing the appropriate signal, autophosphorylates and in turn activates the cytosolic response regulator SaeR. The sequence is that of Histidine protein kinase SaeS (saeS) from Staphylococcus aureus (strain MRSA252).